Reading from the N-terminus, the 506-residue chain is Histidine ammonia-lyase (506 aa).

Positions 143-145 (ASG) form a cross-link, 5-imidazolinone (Ala-Gly). Ser144 is subject to 2,3-didehydroalanine (Ser).

Belongs to the PAL/histidase family. Post-translationally, contains an active site 4-methylidene-imidazol-5-one (MIO), which is formed autocatalytically by cyclization and dehydration of residues Ala-Ser-Gly.

It is found in the cytoplasm. The enzyme catalyses L-histidine = trans-urocanate + NH4(+). It functions in the pathway amino-acid degradation; L-histidine degradation into L-glutamate; N-formimidoyl-L-glutamate from L-histidine: step 1/3. The protein is Histidine ammonia-lyase of Salmonella paratyphi A (strain ATCC 9150 / SARB42).